Consider the following 399-residue polypeptide: Acetate kinase (399 aa).

A Mg(2+)-binding site is contributed by asparagine 7. Lysine 14 is a binding site for ATP. Residue arginine 89 coordinates substrate. Aspartate 146 (proton donor/acceptor) is an active-site residue. ATP-binding positions include 206–210 (HIGSG), 280–282 (DFR), and 328–332 (GIGEN). Glutamate 382 contacts Mg(2+).

The protein belongs to the acetokinase family. In terms of assembly, homodimer. Mg(2+) serves as cofactor. The cofactor is Mn(2+).

The protein localises to the cytoplasm. It carries out the reaction acetate + ATP = acetyl phosphate + ADP. It functions in the pathway metabolic intermediate biosynthesis; acetyl-CoA biosynthesis; acetyl-CoA from acetate: step 1/2. Functionally, catalyzes the formation of acetyl phosphate from acetate and ATP. Can also catalyze the reverse reaction. This chain is Acetate kinase, found in Campylobacter hominis (strain ATCC BAA-381 / DSM 21671 / CCUG 45161 / LMG 19568 / NCTC 13146 / CH001A).